The primary structure comprises 485 residues: Eukaryotic translation initiation factor 3 subunit E (485 aa).

The region spanning 219–391 (NQPDGPDGIV…GEIHITKPVT (173 aa)) is the PCI domain. Residues 444–485 (QGGGKSNKKGDYKKGDYKKGGDFKKGGDFKKGGDHKKRAWVK) form a disordered region. Residues 451–475 (KKGDYKKGDYKKGGDFKKGGDFKKG) show a composition bias toward basic and acidic residues. The segment covering 476-485 (GDHKKRAWVK) has biased composition (basic residues).

Belongs to the eIF-3 subunit E family. As to quaternary structure, component of the eukaryotic translation initiation factor 3 (eIF-3) complex.

It is found in the cytoplasm. In terms of biological role, component of the eukaryotic translation initiation factor 3 (eIF-3) complex, which is involved in protein synthesis of a specialized repertoire of mRNAs and, together with other initiation factors, stimulates binding of mRNA and methionyl-tRNAi to the 40S ribosome. The eIF-3 complex specifically targets and initiates translation of a subset of mRNAs involved in cell proliferation. The polypeptide is Eukaryotic translation initiation factor 3 subunit E (Monosiga brevicollis (Choanoflagellate)).